The primary structure comprises 252 residues: 2-succinyl-6-hydroxy-2,4-cyclohexadiene-1-carboxylate synthase (252 aa).

The protein belongs to the AB hydrolase superfamily. MenH family. As to quaternary structure, monomer.

It catalyses the reaction 5-enolpyruvoyl-6-hydroxy-2-succinyl-cyclohex-3-ene-1-carboxylate = (1R,6R)-6-hydroxy-2-succinyl-cyclohexa-2,4-diene-1-carboxylate + pyruvate. The protein operates within quinol/quinone metabolism; 1,4-dihydroxy-2-naphthoate biosynthesis; 1,4-dihydroxy-2-naphthoate from chorismate: step 3/7. It functions in the pathway quinol/quinone metabolism; menaquinone biosynthesis. Its function is as follows. Catalyzes a proton abstraction reaction that results in 2,5-elimination of pyruvate from 2-succinyl-5-enolpyruvyl-6-hydroxy-3-cyclohexene-1-carboxylate (SEPHCHC) and the formation of 2-succinyl-6-hydroxy-2,4-cyclohexadiene-1-carboxylate (SHCHC). In Escherichia coli O9:H4 (strain HS), this protein is 2-succinyl-6-hydroxy-2,4-cyclohexadiene-1-carboxylate synthase.